Here is a 933-residue protein sequence, read N- to C-terminus: Potassium voltage-gated channel subfamily KQT member 5 (933 aa).

Residues M1 to W126 lie on the Cytoplasmic side of the membrane. A Phosphoserine modification is found at S89. The helical transmembrane segment at A127–F147 threads the bilayer. The Extracellular segment spans residues S148–A157. Residues S158–I178 form a helical membrane-spanning segment. The Cytoplasmic portion of the chain corresponds to R179 to K201. Residues P202–T222 traverse the membrane as a helical segment. At Q223–S230 the chain is on the extracellular side. The helical; Voltage-sensor transmembrane segment at A231–W253 threads the bilayer. A 1,2-diacyl-sn-glycero-3-phospho-(1D-myo-inositol-4,5-bisphosphate) contacts are provided by R249 and K265. Residues K254–L267 are Cytoplasmic-facing. Residues I268–V288 form a helical membrane-spanning segment. The Extracellular portion of the chain corresponds to E289 to Y299. An intramembrane region (pore-forming) is located at residues A300–P320. Over L321–R326 the chain is Extracellular. Residues L327 to L347 form a helical membrane-spanning segment. Over G348–N933 the chain is Cytoplasmic. An a 1,2-diacyl-sn-glycero-3-phospho-(1D-myo-inositol-4,5-bisphosphate)-binding site is contributed by K362. Positions A371–W379 are interaction with CALM. Residues S405–S465 are disordered. Positions R432–A441 are enriched in polar residues. Residue S448 is modified to Phosphoserine. Residues V522–M529 are interaction with CALM. Positions K578–T598 are disordered. Over residues S583–T598 the composition is skewed to basic and acidic residues. S832 is modified (phosphoserine). The disordered stretch occupies residues G878–N933. Positions S900–A924 are enriched in polar residues.

The protein belongs to the potassium channel family. KQT (TC 1.A.1.15) subfamily. Kv7.5/KCNQ5 sub-subfamily. In terms of assembly, homotetramer; forms a functional homotetrameric channel resulting in the expression of a small M-current. Heterotetramer with KCNQ3; forms heterotetrameric M-channel responsible for the native M-current. Heterotetramer with KCNQ1; forms a functional voltage-gated potassium channel. Interacts (via C-terminus) with calmodulin/CALM; forms a heterooctameric structure (with 4:4 KCNQ1:CALM stoichiometry); the interaction is calcium-independent, constitutive and participates in the channel function. In terms of tissue distribution, strongly expressed in brain. Also expressed in colon, lung and uterus.

Its subcellular location is the cell membrane. The enzyme catalyses K(+)(in) = K(+)(out). Phosphatidylinositol-4,5-bisphosphate (PIP2) is essential to activate KCNQ5 channel by inducing the coupling of the voltage-sensing domain (VSD) and the pore-forming domain (PD). Calcium suppresses KCNQ5 channel current through calcium-bound CALM C-terminus. Therefore CALM acts as calcium sensor that controls channel activity. Zinc potentiates channel activity in a pH-dependent manner. The activity is modulated by small changes in cell volume. Activated by the anticonvulsant retigabine. Inhibited by linopirdine and XE991. In terms of biological role, pore-forming subunit of the voltage-gated potassium (Kv) channel broadly expressed in brain and skeletal muscle and involved in the regulation of neuronal excitability. Associates with KCNQ3/Kv7.3 pore-forming subunit to form a potassium channel which contributes to M-type current, a slowly activating and deactivating potassium conductance which plays a critical role in determining the subthreshold electrical excitability of neurons. Contributes, with other potassium channels, to the molecular diversity of a heterogeneous population of M-channels, varying in kinetic and pharmacological properties, which underlie this physiologically important current. Also forms a functional channel with KCNQ1/Kv7.1 subunit that may contribute to vasoconstriction and hypertension. Channel may be selectively permeable in vitro to other cations besides potassium, in decreasing order of affinity K(+) = Rb(+) &gt; Cs(+) &gt; Na(+). This is Potassium voltage-gated channel subfamily KQT member 5 from Mus musculus (Mouse).